The sequence spans 94 residues: Pyrimidine/purine nucleoside phosphorylase (94 aa).

Belongs to the nucleoside phosphorylase PpnP family.

The enzyme catalyses a purine D-ribonucleoside + phosphate = a purine nucleobase + alpha-D-ribose 1-phosphate. It carries out the reaction adenosine + phosphate = alpha-D-ribose 1-phosphate + adenine. It catalyses the reaction cytidine + phosphate = cytosine + alpha-D-ribose 1-phosphate. The catalysed reaction is guanosine + phosphate = alpha-D-ribose 1-phosphate + guanine. The enzyme catalyses inosine + phosphate = alpha-D-ribose 1-phosphate + hypoxanthine. It carries out the reaction thymidine + phosphate = 2-deoxy-alpha-D-ribose 1-phosphate + thymine. It catalyses the reaction uridine + phosphate = alpha-D-ribose 1-phosphate + uracil. The catalysed reaction is xanthosine + phosphate = alpha-D-ribose 1-phosphate + xanthine. Functionally, catalyzes the phosphorolysis of diverse nucleosides, yielding D-ribose 1-phosphate and the respective free bases. Can use uridine, adenosine, guanosine, cytidine, thymidine, inosine and xanthosine as substrates. Also catalyzes the reverse reactions. This Salmonella arizonae (strain ATCC BAA-731 / CDC346-86 / RSK2980) protein is Pyrimidine/purine nucleoside phosphorylase.